Here is a 715-residue protein sequence, read N- to C-terminus: ATP-dependent DNA helicase Hel308 (715 aa).

The Q motif signature appears at 1 to 29 (MKVGELNVSEKIKEILRERGIEELYPPQA). ATP-binding positions include Q28 and 46–53 (IPTASGKT). Residues 33 to 197 (TSGVLEGENL…WLNAKLIRSD (165 aa)) form the Helicase ATP-binding domain. The DEAH box signature appears at 145-148 (DEIH). A Helicase C-terminal domain is found at 226–422 (WEELVYDAVK…ILRSQILALI (197 aa)).

It belongs to the helicase family. Hel308 subfamily. In terms of assembly, monomer.

The catalysed reaction is Couples ATP hydrolysis with the unwinding of duplex DNA by translocating in the 3'-5' direction.. The enzyme catalyses ATP + H2O = ADP + phosphate + H(+). DNA-dependent ATPase and 3'-5' DNA helicase that may be involved in repair of stalled replication forks. Its function is as follows. Rapidly unwinds double-stranded (ds)DNA with a 3'-overhang, has no strand reannealing capabilities. Binds single-stranded (ss)DNA, dsDNA with a 3'-overhang and ssRNA. The protein is ATP-dependent DNA helicase Hel308 of Pyrococcus abyssi (strain GE5 / Orsay).